Reading from the N-terminus, the 1640-residue chain is Phospholipase D C (1640 aa).

The span at 122–132 (SHRSNQSFNHS) shows a compositional bias: polar residues. Disordered regions lie at residues 122 to 247 (SHRS…KRLS), 264 to 283 (HNQN…HTTT), 439 to 499 (EKQQ…YKYN), and 521 to 541 (DDEY…PSQE). A compositionally biased stretch (low complexity) spans 133–193 (NSTTPLNTTN…YSSDNSYLHN (61 aa)). A compositionally biased stretch (acidic residues) spans 197-231 (DIYEDEDDEDDEDDDDDEDEDDEGKEFEQDDEDES). Residues 232–247 (TISSMSLKNSQAKRLS) are compositionally biased toward polar residues. Low complexity-rich tracts occupy residues 264–273 (HNQNHQNHQN) and 467–499 (TTTT…YKYN). Over residues 521 to 534 (DDEYYYGEYDDEDD) the composition is skewed to acidic residues. One can recognise a PLD phosphodiesterase 1 domain in the interval 1009–1036 (LYWSHHQKVVVVDQRIAFIGGLDLCFGR). Catalysis depends on residues histidine 1014, lysine 1016, and aspartate 1021. Low complexity-rich tracts occupy residues 1149 to 1274 (INNN…NNLN) and 1282 to 1296 (HNNS…QQQQ). Positions 1149 to 1315 (INNNNNNANN…YQPPLPPQQR (167 aa)) are disordered. Residues 1297 to 1306 (QHHHHHHHHY) are compositionally biased toward basic residues. The PLD phosphodiesterase 2 domain occupies 1460 to 1487 (EQIYVHSKVLIVDDKIAIIGSANINDRS). Catalysis depends on residues histidine 1465, lysine 1467, and aspartate 1472.

The protein belongs to the phospholipase D family.

It catalyses the reaction a 1,2-diacyl-sn-glycero-3-phosphocholine + H2O = a 1,2-diacyl-sn-glycero-3-phosphate + choline + H(+). With respect to regulation, inhibited by butan-1-ol. Functionally, plays a role in cell growth. Hydrolyzes membrane phospholipids, such as PtdCho (phosphatidylcholine), producing the free headgroup and PtdOH (phosphatidic acid; signaling molecule on its own). Involved in the inhibition of actin-based motility and endocytosis. Its inhibition causes complete collapse of F-actin organization. The sequence is that of Phospholipase D C (pldC) from Dictyostelium discoideum (Social amoeba).